The chain runs to 1357 residues: Vascular endothelial growth factor receptor 3 (1357 aa).

The first 24 residues, 1–24 (MKRDFTFFCRIWIGIPFFSGLVNG), serve as a signal peptide directing secretion. Ig-like C2-type domains lie at 25–121 (FSMS…YYRC), 138–244 (IFVF…VQVI), 255–343 (PEDS…RELT), 352–442 (PFIS…LNFT), 453–583 (EKEA…TTIP), 583–690 (PEGF…HRKY), and 699–785 (PRYR…ATVS). Over 25–796 (FSMSPPTLDN…IGSDDKTNVE (772 aa)) the chain is Extracellular. N-linked (GlcNAc...) asparagine glycans are attached at residues Asn-44, Asn-48, Asn-114, Asn-216, and Asn-271. 2 disulfides stabilise this stretch: Cys-51–Cys-121 and Cys-173–Cys-225. A disulfide bridge links Cys-272 with Cys-331. N-linked (GlcNAc...) asparagine glycans are attached at residues Asn-360, Asn-400, and Asn-440. Cystine bridges form between Cys-473-Cys-562, Cys-493-Cys-514, and Cys-606-Cys-674. N-linked (GlcNAc...) asparagine glycosylation is found at Asn-553, Asn-610, Asn-660, Asn-707, Asn-711, and Asn-751. Cys-720 and Cys-772 are joined by a disulfide. A helical transmembrane segment spans residues 797-817 (IVILIGTGVIAIFFWVLLLVI). At 818–1357 (FCNVKRVNPA…DYFSSSDQAV (540 aa)) the chain is on the cytoplasmic side. One can recognise a Protein kinase domain in the interval 866–1181 (LRLGKVLGHG…ALVEILGDLL (316 aa)). Residues 872-880 (LGHGAFGKV) and Lys-900 contribute to the ATP site. The tract at residues 978–1007 (QSQVRRMIEAGQASQSEHQPSTSSTNPPRV) is disordered. Over residues 989–1005 (QASQSEHQPSTSSTNPP) the composition is skewed to polar residues. Asp-1045 functions as the Proton acceptor in the catalytic mechanism. 2 positions are modified to phosphotyrosine; by autocatalysis: Tyr-1071 and Tyr-1076. The segment at 1192 to 1212 (NVSQSSEDDGFSQASSRPPSQ) is disordered. Phosphotyrosine; by autocatalysis occurs at positions 1226, 1227, 1334, and 1338.

Belongs to the protein kinase superfamily. Tyr protein kinase family. CSF-1/PDGF receptor subfamily. In terms of assembly, interacts with vegfc and vegfd. Monomer in the absence of bound vegfc or vegfd. Homodimer in the presence of bound vegfc or vegfd. In terms of processing, autophosphorylated on tyrosine residues upon ligand binding. Autophosphorylation occurs in trans, i.e. one subunit of the dimeric receptor phosphorylates tyrosine residues on the other subunit.

The protein localises to the cell membrane. It localises to the cytoplasm. It is found in the nucleus. It catalyses the reaction L-tyrosyl-[protein] + ATP = O-phospho-L-tyrosyl-[protein] + ADP + H(+). With respect to regulation, present in an inactive conformation in the absence of bound ligand. Binding of vegfc or vegfd leads to dimerization and activation by autophosphorylation on tyrosine residues. Its function is as follows. Tyrosine-protein kinase that acts as a cell-surface receptor for vegf or vegfc. Combinations of multiple VEGF receptors are required for development of different blood vessel types in the embryo. Involved in angiogenesis, specifically in VEGF-induced sprouting of new blood vessels, but not required for proper vasculogenesis or hematopoiesis. This chain is Vascular endothelial growth factor receptor 3 (flt4), found in Danio rerio (Zebrafish).